A 117-amino-acid polypeptide reads, in one-letter code: ATP-dependent Clp protease adapter protein ClpS 1 (117 aa).

It belongs to the ClpS family. In terms of assembly, binds to the N-terminal domain of the chaperone ClpA.

Its function is as follows. Involved in the modulation of the specificity of the ClpAP-mediated ATP-dependent protein degradation. In Agrobacterium fabrum (strain C58 / ATCC 33970) (Agrobacterium tumefaciens (strain C58)), this protein is ATP-dependent Clp protease adapter protein ClpS 1.